A 411-amino-acid chain; its full sequence is Corticotropin-releasing factor receptor 2 (411 aa).

The segment at residues 1 to 19 is a signal peptide (not cleaved); that stretch reads MDAALLLSLLEANCSLALA. At 1-108 the chain is on the extracellular side; it reads MDAALLLSLL…EPILDDKQRK (108 aa). N-linked (GlcNAc...) asparagine glycans are attached at residues N13, N41, N74, N86, and N94. Cystine bridges form between C14–C50, C40–C83, and C64–C98. The helical transmembrane segment at 109-139 threads the bilayer; it reads YDLHYRIALIINYLGHCVSVVALVAAFLLFL. The Cytoplasmic portion of the chain corresponds to 140–146; it reads VLRSIRC. The helical transmembrane segment at 147 to 171 threads the bilayer; it reads LRNVIHWNLITTFILRNITWFLLQL. At 172-185 the chain is on the extracellular side; it reads IDHEVHEGNEVWCR. The cysteines at positions 184 and 254 are disulfide-linked. Residues 186–214 form a helical membrane-spanning segment; it reads CVTTIFNYFVVTNFFWMFVEGCYLHTAIV. Residues 215–221 are Cytoplasmic-facing; sequence MTYSTEH. A helical membrane pass occupies residues 222-249; it reads LRKWLFLFIGWCIPCPIIVAWAVGKLYY. Residues 250 to 265 are Extracellular-facing; the sequence is ENEQCWFGKEPGDLVD. Residues 266 to 291 traverse the membrane as a helical segment; that stretch reads YIYQGPIILVLLINFVFLFNIVRILM. Topologically, residues 292–302 are cytoplasmic; it reads TKLRASTTSET. The helical transmembrane segment at 303 to 327 threads the bilayer; the sequence is IQYRKAVKATLVLLPLLGITYMLFF. The Extracellular portion of the chain corresponds to 328–334; that stretch reads VNPGEDD. The chain crosses the membrane as a helical span at residues 335–364; sequence LSQIVFIYFNSFLQSFQGFFVSVFYCFFNG. Over 365–411 the chain is Cytoplasmic; that stretch reads EVRSALRKRWHRWQDHHALRVPVARAMSIPTSPTRISFHSIKQTAAV.

This sequence belongs to the G-protein coupled receptor 2 family. In terms of assembly, monomer. Interacts (via N-terminal extracellular domain) with CRF, UCN, UCN2 and UCN3. An N-glycosylation site within the signal peptide impedes its proper cleavage and function. Predominantly expressed in limbic regions of the brain such as the lateral septum, the entorhinal cortex, the hypothalamic ventromedial nucleus and several amygdaloid nuclei. Also detectable in lung, kidney and heart.

Its subcellular location is the cell membrane. Its function is as follows. G-protein coupled receptor for CRH (corticotropin-releasing factor), UCN (urocortin), UCN2 and UCN3. Has high affinity for UCN. Ligand binding causes a conformation change that triggers signaling via guanine nucleotide-binding proteins (G proteins) and down-stream effectors, such as adenylate cyclase. Promotes the activation of adenylate cyclase, leading to increased intracellular cAMP levels. This chain is Corticotropin-releasing factor receptor 2 (Crhr2), found in Rattus norvegicus (Rat).